The sequence spans 473 residues: Probable dipeptidase (473 aa).

The active site involves C10.

Belongs to the peptidase C69 family.

It carries out the reaction an L-aminoacyl-L-amino acid + H2O = 2 an L-alpha-amino acid. The chain is Probable dipeptidase from Latilactobacillus sakei (Lactobacillus sakei).